We begin with the raw amino-acid sequence, 441 residues long: Growth/differentiation factor 9 (441 aa).

An N-terminal signal peptide occupies residues 1–29 (MALPSNFLLGVCCFAWLCFLSSLSSQAST). Positions 30 to 306 (EESQSGASEN…EVERSPRRRR (277 aa)) are excised as a propeptide. N-linked (GlcNAc...) asparagine glycosylation is found at N163, N229, N258, and N325. Disulfide bonds link C340-C406, C369-C438, and C373-C440.

This sequence belongs to the TGF-beta family. Homodimer or heterodimer (Potential). But, in contrast to other members of this family, cannot be disulfide-linked. Phosphorylated; phosphorylation is critical for GDF9 function. As to expression, ovary. Strongly expressed in germinal vesicle (GV) stage oocytes, MII-stage oocytes and in zygotes.

The protein localises to the secreted. Required for ovarian folliculogenesis. The sequence is that of Growth/differentiation factor 9 (Gdf9) from Mus musculus (Mouse).